The following is a 327-amino-acid chain: Ribose-phosphate pyrophosphokinase (327 aa).

Residues Asp40–Glu42 and Arg99–Gln100 each bind ATP. Mg(2+)-binding residues include His134 and Asp173. The active site involves Lys196. Residues Arg198, Asp222, and Asp226 to Thr230 contribute to the D-ribose 5-phosphate site.

The protein belongs to the ribose-phosphate pyrophosphokinase family. Class I subfamily. Homohexamer. Requires Mg(2+) as cofactor.

Its subcellular location is the cytoplasm. The catalysed reaction is D-ribose 5-phosphate + ATP = 5-phospho-alpha-D-ribose 1-diphosphate + AMP + H(+). It functions in the pathway metabolic intermediate biosynthesis; 5-phospho-alpha-D-ribose 1-diphosphate biosynthesis; 5-phospho-alpha-D-ribose 1-diphosphate from D-ribose 5-phosphate (route I): step 1/1. In terms of biological role, involved in the biosynthesis of the central metabolite phospho-alpha-D-ribosyl-1-pyrophosphate (PRPP) via the transfer of pyrophosphoryl group from ATP to 1-hydroxyl of ribose-5-phosphate (Rib-5-P). The protein is Ribose-phosphate pyrophosphokinase of Neisseria meningitidis serogroup A / serotype 4A (strain DSM 15465 / Z2491).